Consider the following 1443-residue polypeptide: ARF guanine-nucleotide exchange factor GNL1 (1443 aa).

Residues 554-743 form the SEC7 domain; it reads FVRKVKHIKK…SEIYHSIRHS (190 aa). The active site involves E658. Disordered regions lie at residues 917 to 949 and 1424 to 1443; these read DDPE…AMPR and DQFQ…GNEV. A compositionally biased stretch (polar residues) spans 939–949; sequence VSQSQPSAMPR. Basic and acidic residues predominate over residues 1425 to 1435; sequence QFQRRNAKPED.

In terms of assembly, homodimer.

It is found in the cytoplasm. The protein resides in the cytosol. Its subcellular location is the golgi apparatus membrane. In terms of biological role, activates the ARF proteins by exchanging bound GDP for free GTP. Plays a role in vesicular protein sorting. Acts as the major regulator of retrograde Golgi to endoplasmic reticulum trafficking but is also involved in the endocytosis process. Could function redundantly with GNOM. Regulates vesicle trafficking required for the coordinated polar localization of auxin efflux carriers which in turn determines the direction of auxin flow. Mediates the endocytosis of PIN2 from plasma membrane to endosomal compartments. Required for maintenance of endoplasmic reticulum morphology. The sequence is that of ARF guanine-nucleotide exchange factor GNL1 (GNL1) from Arabidopsis thaliana (Mouse-ear cress).